Reading from the N-terminus, the 180-residue chain is Large ribosomal subunit protein uL5 (180 aa).

Belongs to the universal ribosomal protein uL5 family. As to quaternary structure, part of the 50S ribosomal subunit; part of the 5S rRNA/L5/L18/L25 subcomplex. Contacts the 5S rRNA and the P site tRNA. Forms a bridge to the 30S subunit in the 70S ribosome.

Functionally, this is one of the proteins that bind and probably mediate the attachment of the 5S RNA into the large ribosomal subunit, where it forms part of the central protuberance. In the 70S ribosome it contacts protein S13 of the 30S subunit (bridge B1b), connecting the 2 subunits; this bridge is implicated in subunit movement. Contacts the P site tRNA; the 5S rRNA and some of its associated proteins might help stabilize positioning of ribosome-bound tRNAs. The polypeptide is Large ribosomal subunit protein uL5 (Streptococcus pyogenes serotype M49 (strain NZ131)).